We begin with the raw amino-acid sequence, 59 residues long: UPF0181 protein YoaH (59 aa).

It belongs to the UPF0181 family.

The polypeptide is UPF0181 protein YoaH (Shigella sonnei (strain Ss046)).